Consider the following 169-residue polypeptide: MYTSGYAHRSSSFSSAASKIARVSTENTTAGLISEVVYREDQPMMTQLLLLPLLQQLGQQSRWQLWLTPQQKLSREWVQASGLPLTKVMQISQLSPCHTVESMVRALRTGNYSVVIGWLADDLTEEEHAELVDAANEGNAMGFIMRPVSASSHTTRQLSGLKIHSNLYH.

Residues 106 to 112 form a ftsZ binding region; that stretch reads ALRTGNY. Positions 162-169 are lon protease binding; that stretch reads KIHSNLYH.

The protein belongs to the SulA family. In terms of assembly, interacts with FtsZ. In terms of processing, is rapidly cleaved and degraded by the Lon protease once DNA damage is repaired.

Its function is as follows. Component of the SOS system and an inhibitor of cell division. Accumulation of SulA causes rapid cessation of cell division and the appearance of long, non-septate filaments. In the presence of GTP, binds a polymerization-competent form of FtsZ in a 1:1 ratio, thus inhibiting FtsZ polymerization and therefore preventing it from participating in the assembly of the Z ring. This mechanism prevents the premature segregation of damaged DNA to daughter cells during cell division. This Shigella boydii serotype 4 (strain Sb227) protein is Cell division inhibitor SulA.